Reading from the N-terminus, the 168-residue chain is Photosystem I assembly protein Ycf3 (168 aa).

TPR repeat units lie at residues 35–68, 72–105, and 120–153; these read AFTY…EIDP, SYIL…NPFL, and GEQA…TPGN.

Belongs to the Ycf3 family.

The protein resides in the plastid. It localises to the chloroplast thylakoid membrane. Functionally, essential for the assembly of the photosystem I (PSI) complex. May act as a chaperone-like factor to guide the assembly of the PSI subunits. This is Photosystem I assembly protein Ycf3 from Gossypium barbadense (Sea Island cotton).